A 426-amino-acid chain; its full sequence is Histidine--tRNA ligase (426 aa).

It belongs to the class-II aminoacyl-tRNA synthetase family. As to quaternary structure, homodimer.

It is found in the cytoplasm. It carries out the reaction tRNA(His) + L-histidine + ATP = L-histidyl-tRNA(His) + AMP + diphosphate + H(+). The sequence is that of Histidine--tRNA ligase from Malacoplasma penetrans (strain HF-2) (Mycoplasma penetrans).